A 109-amino-acid polypeptide reads, in one-letter code: MKFTRVCDRRDVPEGEALKVESGGTSVAIFNVDGELFATQDRCTHGDWSLSDGGYLEGDVVECSLHMGKFCVRTGKVKSPPPCEALKIFPIRIEDNDVLVDFEAGYLAP.

The region spanning 4–100 (TRVCDRRDVP…IRIEDNDVLV (97 aa)) is the Rieske domain. Residues Cys-43, His-45, Cys-63, and His-66 each coordinate [2Fe-2S] cluster.

This sequence belongs to the bacterial ring-hydroxylating dioxygenase ferredoxin component family. This dioxygenase system consists of four proteins: the two subunits of the hydroxylase component (BphA and BphE), a ferredoxin (BphF) and a ferredoxin reductase (BphG).

Functionally, this protein seems to be a 2Fe-2S ferredoxin. This is Biphenyl dioxygenase system ferredoxin subunit (bphF) from Paraburkholderia xenovorans (strain LB400).